Reading from the N-terminus, the 189-residue chain is Ribosome maturation factor RimM (189 aa).

The span at 1–16 (MAPSCPTRSRVWSSRT) shows a compositional bias: polar residues. The segment at 1 to 21 (MAPSCPTRSRVWSSRTSPPPD) is disordered. In terms of domain architecture, PRC barrel spans 118–189 (ENEFYWSDLI…TVEVDWGEDY (72 aa)).

This sequence belongs to the RimM family. As to quaternary structure, binds ribosomal protein uS19.

It localises to the cytoplasm. Its function is as follows. An accessory protein needed during the final step in the assembly of 30S ribosomal subunit, possibly for assembly of the head region. Essential for efficient processing of 16S rRNA. May be needed both before and after RbfA during the maturation of 16S rRNA. It has affinity for free ribosomal 30S subunits but not for 70S ribosomes. In Thiobacillus denitrificans (strain ATCC 25259 / T1), this protein is Ribosome maturation factor RimM.